The chain runs to 118 residues: Large ribosomal subunit protein bL20 (118 aa).

Belongs to the bacterial ribosomal protein bL20 family.

In terms of biological role, binds directly to 23S ribosomal RNA and is necessary for the in vitro assembly process of the 50S ribosomal subunit. It is not involved in the protein synthesizing functions of that subunit. The protein is Large ribosomal subunit protein bL20 of Leptothrix cholodnii (strain ATCC 51168 / LMG 8142 / SP-6) (Leptothrix discophora (strain SP-6)).